The chain runs to 324 residues: Glutathione synthetase (324 aa).

Residues lysine 129–valine 313 enclose the ATP-grasp domain. Valine 155–glycine 211 contacts ATP. 2 residues coordinate Mg(2+): glutamate 284 and asparagine 286.

This sequence belongs to the prokaryotic GSH synthase family. Requires Mg(2+) as cofactor. Mn(2+) serves as cofactor.

It carries out the reaction gamma-L-glutamyl-L-cysteine + glycine + ATP = glutathione + ADP + phosphate + H(+). Its pathway is sulfur metabolism; glutathione biosynthesis; glutathione from L-cysteine and L-glutamate: step 2/2. The protein is Glutathione synthetase of Gloeobacter violaceus (strain ATCC 29082 / PCC 7421).